A 255-amino-acid polypeptide reads, in one-letter code: Hydroxyacylglutathione hydrolase (255 aa).

Residues His53, His55, Asp57, His58, His111, Asp128, and His166 each coordinate Zn(2+).

It belongs to the metallo-beta-lactamase superfamily. Glyoxalase II family. Monomer. It depends on Zn(2+) as a cofactor.

The catalysed reaction is an S-(2-hydroxyacyl)glutathione + H2O = a 2-hydroxy carboxylate + glutathione + H(+). Its pathway is secondary metabolite metabolism; methylglyoxal degradation; (R)-lactate from methylglyoxal: step 2/2. Its function is as follows. Thiolesterase that catalyzes the hydrolysis of S-D-lactoyl-glutathione to form glutathione and D-lactic acid. The sequence is that of Hydroxyacylglutathione hydrolase from Nitrosomonas eutropha (strain DSM 101675 / C91 / Nm57).